A 2280-amino-acid chain; its full sequence is Protein Ycf2 (2280 aa).

1634–1641 is a binding site for ATP; the sequence is GSIGTGRS.

The protein belongs to the Ycf2 family.

It is found in the plastid. Its subcellular location is the chloroplast stroma. In terms of biological role, probable ATPase of unknown function. Its presence in a non-photosynthetic plant (Epifagus virginiana) and experiments in tobacco indicate that it has an essential function which is probably not related to photosynthesis. The polypeptide is Protein Ycf2 (Eucalyptus globulus subsp. globulus (Tasmanian blue gum)).